Reading from the N-terminus, the 93-residue chain is MPRSLKKGPFVDDHLLKKVDVQNEKGTKHVIRTWSRRSTVIPDMLGHTIAVHDGRKHVPVFITEGMVGHKLGEFAPTRTFRGHVKEDRRSRRG.

The protein belongs to the universal ribosomal protein uS19 family.

Its function is as follows. Protein S19 forms a complex with S13 that binds strongly to the 16S ribosomal RNA. The chain is Small ribosomal subunit protein uS19 from Parafrankia sp. (strain EAN1pec).